A 482-amino-acid polypeptide reads, in one-letter code: Chromosome stability protein 9 (482 aa).

2 disordered regions span residues 239–263 (SSLR…VNKN) and 418–482 (SGLA…RRIR). The span at 240–249 (SLRNSSKNNN) shows a compositional bias: low complexity. Polar residues predominate over residues 250 to 263 (GTVTPSTSGRVNKN). Low complexity predominate over residues 418–437 (SGLAFSSSSNSLQQSKLPKS). Polar residues-rich tracts occupy residues 440 to 453 (LKRS…TNTH) and 463 to 473 (RSSNTVLGSSK).

Component of the synapsis initiation complex composed of at least ZIP2, ZIP3, MSH4 and MSH5. Also interacts with ZIP1, MRE11, RAD51 and RAD53.

It is found in the nucleus. It localises to the chromosome. Its function is as follows. Component of the synapsis initiation complex (SIC) necessary for the synaptonemal complex assembly. Stabilizes the ZIP2 component to the chromosomes. The SIC complex loads onto chromosomes and nucleates ZIP1 polymerization, a molecular zipper that acts to bring homologous chromosomes in close apposition, which is required for meiotic crossover. May also be involved in double strand break repair. In Saccharomyces cerevisiae (strain ATCC 204508 / S288c) (Baker's yeast), this protein is Chromosome stability protein 9 (CST9).